Reading from the N-terminus, the 89-residue chain is Small ribosomal subunit protein bS16 (89 aa).

This sequence belongs to the bacterial ribosomal protein bS16 family.

The sequence is that of Small ribosomal subunit protein bS16 from Psychrobacter arcticus (strain DSM 17307 / VKM B-2377 / 273-4).